Here is a 154-residue protein sequence, read N- to C-terminus: Large ribosomal subunit protein uL13 (154 aa).

Belongs to the universal ribosomal protein uL13 family. In terms of assembly, part of the 50S ribosomal subunit.

Functionally, this protein is one of the early assembly proteins of the 50S ribosomal subunit, although it is not seen to bind rRNA by itself. It is important during the early stages of 50S assembly. This Cereibacter sphaeroides (strain ATCC 17029 / ATH 2.4.9) (Rhodobacter sphaeroides) protein is Large ribosomal subunit protein uL13.